The sequence spans 798 residues: Phenylalanine--tRNA ligase beta subunit (798 aa).

The region spanning 39–148 (NPIFDGFLVG…EDIPIGKKIN (110 aa)) is the tRNA-binding domain. One can recognise a B5 domain in the interval 402–477 (SCSNKIKLYH…RIYNYNNIPL (76 aa)). Residues Asp455, Asp461, and Asp465 each coordinate Mg(2+). Positions 704-797 (SKYPTSRRDI…LKKKFQVVLR (94 aa)) constitute an FDX-ACB domain.

This sequence belongs to the phenylalanyl-tRNA synthetase beta subunit family. Type 1 subfamily. In terms of assembly, tetramer of two alpha and two beta subunits. Mg(2+) serves as cofactor.

Its subcellular location is the cytoplasm. The catalysed reaction is tRNA(Phe) + L-phenylalanine + ATP = L-phenylalanyl-tRNA(Phe) + AMP + diphosphate + H(+). The protein is Phenylalanine--tRNA ligase beta subunit (pheT) of Buchnera aphidicola subsp. Schizaphis graminum (strain Sg).